The following is a 60-amino-acid chain: Large ribosomal subunit protein bL32 (60 aa).

This sequence belongs to the bacterial ribosomal protein bL32 family.

The chain is Large ribosomal subunit protein bL32 from Geobacter sulfurreducens (strain ATCC 51573 / DSM 12127 / PCA).